Reading from the N-terminus, the 96-residue chain is Fruit-specific protein (96 aa).

3 disulfide bridges follow: Cys-59–Cys-75, Cys-63–Cys-78, and Cys-69–Cys-92.

In terms of tissue distribution, fruit specific.

This chain is Fruit-specific protein (2A11), found in Solanum lycopersicum (Tomato).